We begin with the raw amino-acid sequence, 465 residues long: Azaphilone cluster-specific transcription factor azaR (465 aa).

The span at 1–16 shows a compositional bias: low complexity; that stretch reads MSDSRTTTTKNNTTNH. Residues 1–25 are disordered; the sequence is MSDSRTTTTKNNTTNHKTSRQGPGS. Positions 27–53 form a DNA-binding region, zn(2)-C6 fungal-type; the sequence is CEECRRRKLRCDRQPQCQNCVDAGVYC.

It localises to the nucleus. In terms of biological role, transcription factor that regulates the expression of the gene cluster that mediates the biosynthesis of azaphilones, a class of fungal metabolites characterized by a highly oxygenated pyrano-quinone bicyclic core and exhibiting a broad range of bioactivities. The polypeptide is Azaphilone cluster-specific transcription factor azaR (Aspergillus niger (strain ATCC 1015 / CBS 113.46 / FGSC A1144 / LSHB Ac4 / NCTC 3858a / NRRL 328 / USDA 3528.7)).